The chain runs to 466 residues: Histidine--tRNA ligase (466 aa).

The protein belongs to the class-II aminoacyl-tRNA synthetase family. As to quaternary structure, homodimer.

Its subcellular location is the cytoplasm. The enzyme catalyses tRNA(His) + L-histidine + ATP = L-histidyl-tRNA(His) + AMP + diphosphate + H(+). The protein is Histidine--tRNA ligase (hisS) of Bifidobacterium longum (strain NCC 2705).